A 134-amino-acid chain; its full sequence is Complexin-2 (134 aa).

Residues 1-114 are disordered; the sequence is MDFVMKQALG…CGDEEEEEEE (114 aa). Basic and acidic residues predominate over residues 15–85; sequence DMGKMLGGEE…EEKEAEEKAA (71 aa). Positions 28-84 form a coiled coil; the sequence is PDAQKKEEERQEALRQQEEERKAKHARMEAEREKVRQQIRDKYGLKKKEEKEAEEKA. Residues 41 to 97 are interaction with the SNARE complex; sequence LRQQEEERKAKHARMEAEREKVRQQIRDKYGLKKKEEKEAEEKAALEQPCEGSLTRP. Position 93 is a phosphoserine (Ser-93).

Belongs to the complexin/synaphin family. In terms of assembly, binds to the SNARE core complex containing SNAP25, VAMP2 and STX1A. Nervous system. Also present in adrenal chromaffin cells (at protein level).

It localises to the cytoplasm. The protein resides in the cytosol. Its subcellular location is the presynapse. The protein localises to the nucleus. It is found in the perikaryon. Negatively regulates the formation of synaptic vesicle clustering at active zone to the presynaptic membrane in postmitotic neurons. Positively regulates a late step in exocytosis of various cytoplasmic vesicles, such as synaptic vesicles and other secretory vesicles. Also involved in mast cell exocytosis. In Bos taurus (Bovine), this protein is Complexin-2 (CPLX2).